A 764-amino-acid polypeptide reads, in one-letter code: Tyrosine-protein phosphatase corkscrew (764 aa).

In terms of domain architecture, SH2 spans 1–95 (WFHGNLSGKE…GTVVHLRQPF (95 aa)). One can recognise a Tyrosine-protein phosphatase domain in the interval 117-522 (FWEEFESLQQ…KFVYYAVQHY (406 aa)). Residues 174–325 (IRLPTDGDLY…LNGEGNQFKT (152 aa)) form a PTPase insert (Cys/Ser-rich) region. The interval 246 to 273 (SKHKRSESMSASANASAAGTGPGTPTAA) is disordered. Low complexity predominate over residues 255–273 (SASANASAAGTGPGTPTAA). Substrate contacts are provided by residues Asp422, 460–466 (CSAGIGR), and Gln507. Cys460 functions as the Phosphocysteine intermediate in the catalytic mechanism. Positions 599–666 (AAKLQPPLPP…NANGNGNILG (68 aa)) are disordered. Positions 612 to 666 (SNNNNSSGNSGSYCNSSSSTSTAQHNGVVSSSNNCSSGSGSANSSNANGNGNILG) are enriched in low complexity.

Belongs to the protein-tyrosine phosphatase family. Non-receptor class subfamily.

Its subcellular location is the cytoplasm. It catalyses the reaction O-phospho-L-tyrosyl-[protein] + H2O = L-tyrosyl-[protein] + phosphate. Required in all receptor tyrosine kinase signaling pathways. Functions downstream of the receptor tyrosine kinase torso, acting in concert with D-Raf via tailless. Also functions downstream of Egfr (epidermal growth factor receptor) and btl (fibroblast growth factor receptor). The SH2 domain suggests that csw effects its role by mediating heteromeric protein interactions. Maternally required for normal determination of cell fates at the termini of the embryo. Required for cell fate specification of the ventral ectoderm, in the developing embryonic CNS and for embryonic tracheal cell migration. Functions during imaginal development for proper formation of adult structures such as eyes, aristae, L5 wing vein and the tarsal claw. The chain is Tyrosine-protein phosphatase corkscrew (csw) from Drosophila virilis (Fruit fly).